The following is a 475-amino-acid chain: Aspartyl/glutamyl-tRNA(Asn/Gln) amidotransferase subunit B (475 aa).

The protein belongs to the GatB/GatE family. GatB subfamily. As to quaternary structure, heterotrimer of A, B and C subunits.

The enzyme catalyses L-glutamyl-tRNA(Gln) + L-glutamine + ATP + H2O = L-glutaminyl-tRNA(Gln) + L-glutamate + ADP + phosphate + H(+). It catalyses the reaction L-aspartyl-tRNA(Asn) + L-glutamine + ATP + H2O = L-asparaginyl-tRNA(Asn) + L-glutamate + ADP + phosphate + 2 H(+). Its function is as follows. Allows the formation of correctly charged Asn-tRNA(Asn) or Gln-tRNA(Gln) through the transamidation of misacylated Asp-tRNA(Asn) or Glu-tRNA(Gln) in organisms which lack either or both of asparaginyl-tRNA or glutaminyl-tRNA synthetases. The reaction takes place in the presence of glutamine and ATP through an activated phospho-Asp-tRNA(Asn) or phospho-Glu-tRNA(Gln). This chain is Aspartyl/glutamyl-tRNA(Asn/Gln) amidotransferase subunit B, found in Chromobacterium violaceum (strain ATCC 12472 / DSM 30191 / JCM 1249 / CCUG 213 / NBRC 12614 / NCIMB 9131 / NCTC 9757 / MK).